Reading from the N-terminus, the 196-residue chain is RFKKIRRLGALPGLTSKRPRSGNDLKNQLRSVKRSQYRIRLEEKQKLRFHYGLTERQLLKYVHIAGKVKGSTGQVLLQLLEMRLDNILFRLGMASTIPGARQLVNHRHILVNGRIVDIPSYRCKPQDIITTKDKQKSKALIQNYIASSTQPQEELPNHLTIDPFQYKGLVNQIRDSKWIGLKINELLVVEYYSRQT.

Residues 82-143 enclose the S4 RNA-binding domain; sequence MRLDNILFRL…KQKSKALIQN (62 aa).

The protein belongs to the universal ribosomal protein uS4 family. In terms of assembly, part of the 30S ribosomal subunit. Contacts protein S5. The interaction surface between S4 and S5 is involved in control of translational fidelity.

It is found in the plastid. The protein resides in the chloroplast. Its function is as follows. One of the primary rRNA binding proteins, it binds directly to 16S rRNA where it nucleates assembly of the body of the 30S subunit. Functionally, with S5 and S12 plays an important role in translational accuracy. The polypeptide is Small ribosomal subunit protein uS4c (rps4) (Patersonia sp. (strain Lejeune 1997)).